The sequence spans 327 residues: D-alanine--D-alanine ligase (327 aa).

An ATP-grasp domain is found at 113-312; the sequence is KRLWMTHGLA…YEDFVLQVLA (200 aa). 139–194 lines the ATP pocket; sequence VADLGLPLIVKPAREGSSIGLTKVTAADQMRAAFDKAAALDNDVIAETFVDGAELT. The Mg(2+) site is built by D266, E279, and N281.

The protein belongs to the D-alanine--D-alanine ligase family. Mg(2+) serves as cofactor. Requires Mn(2+) as cofactor.

The protein localises to the cytoplasm. The enzyme catalyses 2 D-alanine + ATP = D-alanyl-D-alanine + ADP + phosphate + H(+). It functions in the pathway cell wall biogenesis; peptidoglycan biosynthesis. Functionally, cell wall formation. This Cupriavidus taiwanensis (strain DSM 17343 / BCRC 17206 / CCUG 44338 / CIP 107171 / LMG 19424 / R1) (Ralstonia taiwanensis (strain LMG 19424)) protein is D-alanine--D-alanine ligase.